Here is a 406-residue protein sequence, read N- to C-terminus: Betaine--homocysteine S-methyltransferase 1 (406 aa).

The region spanning Lys-11–Leu-314 is the Hcy-binding domain. An N6-succinyllysine mark is found at Lys-40, Lys-93, and Lys-98. Cys-217 lines the Zn(2+) pocket. Lys-232 and Lys-241 each carry N6-succinyllysine. 2 residues coordinate Zn(2+): Cys-299 and Cys-300. Ser-330 is modified (phosphoserine). Residues Lys-340 and Lys-377 each carry the N6-succinyllysine modification.

As to quaternary structure, homotetramer. The cofactor is Zn(2+).

The protein localises to the cytoplasm. It is found in the cytosol. Its subcellular location is the nucleus. It carries out the reaction L-homocysteine + glycine betaine = N,N-dimethylglycine + L-methionine. The protein operates within amine and polyamine degradation; betaine degradation; sarcosine from betaine: step 1/2. Its pathway is amino-acid biosynthesis; L-methionine biosynthesis via de novo pathway; L-methionine from L-homocysteine (BhmT route): step 1/1. Involved in the regulation of homocysteine metabolism. Converts betaine and homocysteine to dimethylglycine and methionine, respectively. This reaction is also required for the irreversible oxidation of choline. The polypeptide is Betaine--homocysteine S-methyltransferase 1 (BHMT) (Pongo abelii (Sumatran orangutan)).